The primary structure comprises 447 residues: Gamma-glutamyl phosphate reductase (447 aa).

Belongs to the gamma-glutamyl phosphate reductase family.

It localises to the cytoplasm. It catalyses the reaction L-glutamate 5-semialdehyde + phosphate + NADP(+) = L-glutamyl 5-phosphate + NADPH + H(+). Its pathway is amino-acid biosynthesis; L-proline biosynthesis; L-glutamate 5-semialdehyde from L-glutamate: step 2/2. In terms of biological role, catalyzes the NADPH-dependent reduction of L-glutamate 5-phosphate into L-glutamate 5-semialdehyde and phosphate. The product spontaneously undergoes cyclization to form 1-pyrroline-5-carboxylate. The chain is Gamma-glutamyl phosphate reductase from Methanosarcina barkeri (strain Fusaro / DSM 804).